A 274-amino-acid chain; its full sequence is Elongation factor Ts (274 aa).

The segment at 79-82 (TDFV) is involved in Mg(2+) ion dislocation from EF-Tu.

It belongs to the EF-Ts family.

It is found in the cytoplasm. In terms of biological role, associates with the EF-Tu.GDP complex and induces the exchange of GDP to GTP. It remains bound to the aminoacyl-tRNA.EF-Tu.GTP complex up to the GTP hydrolysis stage on the ribosome. This chain is Elongation factor Ts, found in Aster yellows witches'-broom phytoplasma (strain AYWB).